A 372-amino-acid chain; its full sequence is Alginate lyase (372 aa).

Residues 1 to 22 form the signal peptide; the sequence is MKTRLALPCLLGSLLLSSAVHA. Residues 61–62, 134–135, and Tyr252 each bind substrate; these read SK and HT.

Belongs to the polysaccharide lyase 5 family.

The protein resides in the periplasm. It catalyses the reaction Eliminative cleavage of alginate to give oligosaccharides with 4-deoxy-alpha-L-erythro-hex-4-enuronosyl groups at their non-reducing ends and beta-D-mannuronate at their reducing end.. With respect to regulation, monovalent cations such as potassium and sodium enhance activity, as well as a combined action of these cations with magnesium. However, other cations like calcium, cobalt, manganese and zinc, or the presence of EDTA, do not affect the enzymatic activity. Its function is as follows. Catalyzes the depolymerization of alginate by cleaving the beta-1,4 glycosidic bond between two adjacent sugar residues via a beta-elimination mechanism. Degrades deacetylated polymannuronate alginate more efficiently than non-deacetylated polyM. Is able to degrade its own alginate, but at a lower efficiency than that produced from M.pyriferia and P.aeruginosa. May serve to degrade mislocalized alginate that is trapped in the periplasmic space. This is Alginate lyase from Azotobacter chroococcum mcd 1.